The primary structure comprises 461 residues: Argininosuccinate lyase (461 aa).

This sequence belongs to the lyase 1 family. Argininosuccinate lyase subfamily.

The protein resides in the cytoplasm. It carries out the reaction 2-(N(omega)-L-arginino)succinate = fumarate + L-arginine. Its pathway is amino-acid biosynthesis; L-arginine biosynthesis; L-arginine from L-ornithine and carbamoyl phosphate: step 3/3. The chain is Argininosuccinate lyase from Symbiobacterium thermophilum (strain DSM 24528 / JCM 14929 / IAM 14863 / T).